Reading from the N-terminus, the 158-residue chain is Glycine-rich RNA-binding protein 2, mitochondrial (158 aa).

The transit peptide at methionine 1–serine 34 directs the protein to the mitochondrion. The region spanning threonine 35–aspartate 113 is the RRM domain. The residue at position 43 (serine 43) is a Phosphoserine. The interval glycine 122 to glycine 157 is glycine-rich (GR) required for cell-to-cell movement.

The protein belongs to the GR-RBP family. In terms of assembly, binds to small phloem-mobile single-stranded RNAs (ss-sRNA, e.g. small interfering RNA (siRNA) and microRNA (miRNA)) in the phloeme exudate, including viral-derived sRNA (vsiRNA). Interacts with ORRM2, RBG3/ORRM3 and RBG5/ORRM4.

The protein localises to the mitochondrion. It is found in the secreted. Its function is as follows. Promotes the cis-splicing and editing of several mitochondrial RNAs (including NAD5 transcripts). Plays a role in RNA transcription or processing during stress. Binds RNAs and DNAs sequence with a preference to single-stranded nucleic acids. Displays strong affinity to poly(U) sequence. Exerts cold and freezing tolerance, probably by exhibiting an RNA chaperone activity during the cold and freezing adaptation process. Mediates cell-to-cell trafficking of RNA interference (RNAi) signals (small RNAs (sRNA), e.g. small interfering RNA (siRNA) and microRNA (miRNA)) which regulate growth and development, as well as responses to environmental inputs, including pathogen attack; can compromise zucchini yellow mosaic virus (ZYMV) and tobacco rattle virus (TRV) infections at the early stage. The sequence is that of Glycine-rich RNA-binding protein 2, mitochondrial from Arabidopsis thaliana (Mouse-ear cress).